Here is a 449-residue protein sequence, read N- to C-terminus: Glucose-6-phosphate isomerase (449 aa).

Residue glutamate 291 is the Proton donor of the active site. Active-site residues include histidine 312 and lysine 426.

It belongs to the GPI family.

The protein localises to the cytoplasm. The catalysed reaction is alpha-D-glucose 6-phosphate = beta-D-fructose 6-phosphate. The protein operates within carbohydrate biosynthesis; gluconeogenesis. Its pathway is carbohydrate degradation; glycolysis; D-glyceraldehyde 3-phosphate and glycerone phosphate from D-glucose: step 2/4. Its function is as follows. Catalyzes the reversible isomerization of glucose-6-phosphate to fructose-6-phosphate. This is Glucose-6-phosphate isomerase from Enterococcus faecalis (strain ATCC 700802 / V583).